The primary structure comprises 532 residues: Pentatricopeptide repeat-containing protein At4g02820, mitochondrial (532 aa).

The N-terminal 28 residues, methionine 1–threonine 28, are a transit peptide targeting the mitochondrion. The interval proline 35–valine 56 is disordered. PPR repeat units follow at residues glycine 161–lysine 195, serine 196–arginine 226, aspartate 230–proline 264, aspartate 265–leucine 295, asparagine 300–serine 330, asparagine 335–valine 365, aspartate 370–proline 404, serine 405–serine 435, asparagine 442–alanine 472, and asparagine 476–threonine 512.

It belongs to the PPR family. P subfamily.

It is found in the mitochondrion. The protein is Pentatricopeptide repeat-containing protein At4g02820, mitochondrial of Arabidopsis thaliana (Mouse-ear cress).